The following is a 435-amino-acid chain: D-inositol 3-phosphate glycosyltransferase (435 aa).

Residue histidine 25 coordinates 1D-myo-inositol 3-phosphate. Residues 31–32 (QP) and glycine 39 contribute to the UDP-N-acetyl-alpha-D-glucosamine site. 1D-myo-inositol 3-phosphate is bound by residues 36–41 (DAGGMN), lysine 94, tyrosine 127, threonine 151, and arginine 171. UDP-N-acetyl-alpha-D-glucosamine contacts are provided by arginine 245 and lysine 250. Mg(2+)-binding residues include tyrosine 320, arginine 321, and alanine 323. UDP-N-acetyl-alpha-D-glucosamine contacts are provided by glutamate 333 and glutamate 341. A Mg(2+)-binding site is contributed by threonine 347.

It belongs to the glycosyltransferase group 1 family. MshA subfamily. In terms of assembly, homodimer.

The catalysed reaction is 1D-myo-inositol 3-phosphate + UDP-N-acetyl-alpha-D-glucosamine = 1D-myo-inositol 2-acetamido-2-deoxy-alpha-D-glucopyranoside 3-phosphate + UDP + H(+). In terms of biological role, catalyzes the transfer of a N-acetyl-glucosamine moiety to 1D-myo-inositol 3-phosphate to produce 1D-myo-inositol 2-acetamido-2-deoxy-glucopyranoside 3-phosphate in the mycothiol biosynthesis pathway. The chain is D-inositol 3-phosphate glycosyltransferase from Streptosporangium roseum (strain ATCC 12428 / DSM 43021 / JCM 3005 / KCTC 9067 / NCIMB 10171 / NRRL 2505 / NI 9100).